Consider the following 574-residue polypeptide: MLPRALTLSALLALLLAIYLALAPARLSCRCRSWEQCWPSLEAWSHLNASLNSHLVDLRPIASVCHEPILDQPACDIVRRMSNSGRWRTGQPGALINSFWESGFGSNETCSLSSGQENLCHQGRIPLYAAVVESTQEVQTAVKFAREHNLRLVIRNTGHDGAGSSSGPDSFQIFTHRLSDILYHENFRITGSNTSVGPAVSIGAGVLFGDLYVHGGQKGFIVTGGDSATVGAAGGFTQGGGVPGFLGHTWGLAADNVLEFEIVTATGNLVIANAGQHPDLFWALRGGGGGTFGVAVRVTMRTYPDHPAVKSTISITGDGQSPSFWSEGIAGLLTVLQSLNRQGTAGVFRLWQTPAGLLGASTEVYFLNQTEVKDASSVIKSTLGNASDIYIISSNALDTLSSDVEADAPTINELFGSTLVSNGLFQSESGPKLIAERMSQIGLNDGEWILTSNLGGQVNDNKRANTPLHPAWQSSAQLVSLVVNVDTAPGARDRAMRRLTNELMPRLYALDPSQRVSYRNMGDPNEPHFKEVYWGATNYDRLVQIKRDWDPKDLFISRVGIGSERWDFEGFCKV.

The signal sequence occupies residues 1-25; the sequence is MLPRALTLSALLALLLAIYLALAPA. N-linked (GlcNAc...) asparagine glycans are attached at residues Asn-48, Asn-107, Asn-193, Asn-368, and Asn-385. In terms of domain architecture, FAD-binding PCMH-type spans 121–305; that stretch reads HQGRIPLYAA…VRVTMRTYPD (185 aa).

It belongs to the oxygen-dependent FAD-linked oxidoreductase family. The cofactor is FAD.

The catalysed reaction is peniprequinolone + A = yaequinolone E + AH2. The protein operates within secondary metabolite biosynthesis. It participates in alkaloid biosynthesis. It functions in the pathway mycotoxin biosynthesis. In terms of biological role, FAD-linked oxidoreductase; part of the gene cluster that mediates the biosynthesis of penigequinolones, potent insecticidal alkaloids that contain a highly modified 10-carbon prenyl group. The first stage is catalyzed by the nonribosomal peptide synthetase penN that condenses anthranilic acid and O-methyl-L-tyrosine to produce 4'-methoxycyclopeptin. 4'-methoxycyclopeptin is then converted to 4'-methoxydehydrocyclopeptin by the ketoglutarate-dependent dioxygenase penM through dehydrogenation to form a double bond between C-alpha and C-beta of the O-methyltyrosine side chain. PenM also converts its first product methoxydehydrocyclopeptin to 4'-methoxycyclopenin. The following conversion of 4'methoxycyclopenin into 4'-methoxyviridicatin is catalyzed by the cyclopenase penL. 4'-methoxyviridicatin is the precursor of quinolone natural products, and is further converted to quinolinone B. The prenyltransferase penI then catalyzes the canonical Friedel-Crafts alkylation of quinolinone B with dimethylallyl cation to yield dimethylallyl quinolone, which is subjected to FAD-dependent dehydrogenation by the FAD-linked oxidoreductase penH to yield conjugated aryl diene. The delta(3') double bond then serves as the site of the second alkylation with DMAPP catalyzed by the prenyltransferase penG to yield a carbenium ion intermediate, which can be attacked by H(2)O to yield a styrenyl quinolone containing a C3'-hydroxyprenyl chain, or undergo cyclization to yield yaequinolones J1 and J2. The conversion of the styrenyl quinolone into the tetrahydrofuran-containing yaequinolone C is performed by the FAD-dependent monooxygenase penE and involves epoxidation of the terminal C7'-C8' olefin, followed by epoxide ring opening initiated by the C3' hydroxyl group. The predicted cysteine hydrolase penJ acts as an epoxide hydrolase that enhances the rate of the 5-exo-tet cyclization step, increasing the yield of yaequinolone C. PenF catalyzes the cationic rearrangement of the epoxide formed by penE (before ring opening to produce yaequinolone C) into yaequinolone D. Finally, the short-chain dehydrogenase/reductase (SDR)-like reductase penD, catalyzes both the dehydration of yaequinolone D and the reduction of the resulting oxonium to yield penigequinolone. The sequence is that of FAD-linked oxidoreductase penH from Penicillium thymicola.